We begin with the raw amino-acid sequence, 263 residues long: 3-methyl-2-oxobutanoate hydroxymethyltransferase (263 aa).

Residues D45 and D84 each contribute to the Mg(2+) site. 3-methyl-2-oxobutanoate is bound by residues 45-46 (DS), D84, and K112. Position 114 (E114) interacts with Mg(2+). E180 acts as the Proton acceptor in catalysis.

Belongs to the PanB family. In terms of assembly, homodecamer; pentamer of dimers. It depends on Mg(2+) as a cofactor.

The protein localises to the cytoplasm. The enzyme catalyses 3-methyl-2-oxobutanoate + (6R)-5,10-methylene-5,6,7,8-tetrahydrofolate + H2O = 2-dehydropantoate + (6S)-5,6,7,8-tetrahydrofolate. It participates in cofactor biosynthesis; (R)-pantothenate biosynthesis; (R)-pantoate from 3-methyl-2-oxobutanoate: step 1/2. In terms of biological role, catalyzes the reversible reaction in which hydroxymethyl group from 5,10-methylenetetrahydrofolate is transferred onto alpha-ketoisovalerate to form ketopantoate. The protein is 3-methyl-2-oxobutanoate hydroxymethyltransferase of Klebsiella pneumoniae subsp. pneumoniae (strain ATCC 700721 / MGH 78578).